The following is a 55-amino-acid chain: Large ribosomal subunit protein bL33 (55 aa).

A compositionally biased stretch (basic and acidic residues) spans 1–11 (MAKGGREKIKL). A disordered region spans residues 1–29 (MAKGGREKIKLESTAGTGHFYTTTKNKKT). The span at 14–24 (TAGTGHFYTTT) shows a compositional bias: polar residues.

The protein belongs to the bacterial ribosomal protein bL33 family.

The protein is Large ribosomal subunit protein bL33 of Thiobacillus denitrificans (strain ATCC 25259 / T1).